The primary structure comprises 680 residues: 1-deoxy-D-xylulose-5-phosphate synthase (680 aa).

Thiamine diphosphate contacts are provided by residues His-113 and 154 to 156 (GHS). Asp-185 lines the Mg(2+) pocket. Thiamine diphosphate contacts are provided by residues 186–187 (GA), Asn-214, Phe-323, and Glu-408. Residue Asn-214 participates in Mg(2+) binding.

This sequence belongs to the transketolase family. DXPS subfamily. In terms of assembly, homodimer. The cofactor is Mg(2+). Thiamine diphosphate serves as cofactor.

It carries out the reaction D-glyceraldehyde 3-phosphate + pyruvate + H(+) = 1-deoxy-D-xylulose 5-phosphate + CO2. The protein operates within metabolic intermediate biosynthesis; 1-deoxy-D-xylulose 5-phosphate biosynthesis; 1-deoxy-D-xylulose 5-phosphate from D-glyceraldehyde 3-phosphate and pyruvate: step 1/1. Catalyzes the acyloin condensation reaction between C atoms 2 and 3 of pyruvate and glyceraldehyde 3-phosphate to yield 1-deoxy-D-xylulose-5-phosphate (DXP). This chain is 1-deoxy-D-xylulose-5-phosphate synthase, found in Psychrobacter arcticus (strain DSM 17307 / VKM B-2377 / 273-4).